The primary structure comprises 362 residues: 3-dehydroquinate synthase (362 aa).

NAD(+)-binding positions include 71-76 (DGEQYK), 105-109 (GVVGD), 129-130 (TT), Lys-142, Lys-151, and 169-172 (CLKT). The Zn(2+) site is built by Glu-184, His-247, and His-264.

The protein belongs to the sugar phosphate cyclases superfamily. Dehydroquinate synthase family. Requires Co(2+) as cofactor. Zn(2+) serves as cofactor. NAD(+) is required as a cofactor.

The protein localises to the cytoplasm. It catalyses the reaction 7-phospho-2-dehydro-3-deoxy-D-arabino-heptonate = 3-dehydroquinate + phosphate. It participates in metabolic intermediate biosynthesis; chorismate biosynthesis; chorismate from D-erythrose 4-phosphate and phosphoenolpyruvate: step 2/7. Functionally, catalyzes the conversion of 3-deoxy-D-arabino-heptulosonate 7-phosphate (DAHP) to dehydroquinate (DHQ). In Escherichia coli (strain 55989 / EAEC), this protein is 3-dehydroquinate synthase.